We begin with the raw amino-acid sequence, 494 residues long: DEAD-box ATP-dependent RNA helicase 20 (494 aa).

Residues 1-20 (MSRFDGRAADPGSYRDRRSE) show a composition bias toward basic and acidic residues. The disordered stretch occupies residues 1-39 (MSRFDGRAADPGSYRDRRSEGAFGGGTRAFAPTSKADSA). The segment covering 29–39 (AFAPTSKADSA) has biased composition (low complexity). The Q motif motif lies at 91-119 (REFRDVGFPEYVLQEITKAGFVEPTPIQS). In terms of domain architecture, Helicase ATP-binding spans 122–297 (WPMALRGRDL…RNFLFDPYKV (176 aa)). 135–142 (AETGSGKT) lines the ATP pocket. The DEAD box signature appears at 245 to 248 (DEAD). In terms of domain architecture, Helicase C-terminal spans 325–470 (KLVNLLEDIM…KVSPELANMG (146 aa)). The interval 465-494 (ELANMGRGAPPPSSGHRDRYRGYGGGRSWS) is disordered.

This sequence belongs to the DEAD box helicase family. DDX5/DBP2 subfamily.

The protein resides in the nucleus. The enzyme catalyses ATP + H2O = ADP + phosphate + H(+). Its function is as follows. ATP-dependent RNA helicase involved nonsense-mediated mRNA decay and ribosome biogenesis through rRNA processing. In Oryza sativa subsp. japonica (Rice), this protein is DEAD-box ATP-dependent RNA helicase 20.